A 79-amino-acid chain; its full sequence is Protein S100-G (79 aa).

Ser-2 is modified (N-acetylserine). EF-hand domains follow at residues 13 to 48 (IFEK…KGSS) and 45 to 79 (KGSS…KISQ). Ca(2+) contacts are provided by Gln-26 and Glu-31. At Ser-47 the chain carries Phosphoserine. 5 residues coordinate Ca(2+): Asp-58, Asn-60, Asp-62, Glu-64, and Glu-69.

It belongs to the S-100 family.

This is Protein S100-G (S100G) from Equus caballus (Horse).